A 534-amino-acid polypeptide reads, in one-letter code: CTP synthase (534 aa).

The tract at residues 1–265 (MKYIIVTGGV…SNYLLKKLIL (265 aa)) is amidoligase domain. Ser-12 is a CTP binding site. Residue Ser-12 coordinates UTP. 13 to 18 (GLGKGI) contacts ATP. Tyr-53 is a binding site for L-glutamine. Asp-70 serves as a coordination point for ATP. Mg(2+) is bound by residues Asp-70 and Glu-140. CTP is bound by residues 147 to 149 (DIE), 186 to 191 (KTKPTQ), and Lys-222. UTP-binding positions include 186–191 (KTKPTQ) and Lys-222. Residues 289 to 530 (NVAIVGKYTH…MGAMLKKSKE (242 aa)) enclose the Glutamine amidotransferase type-1 domain. Gly-352 is an L-glutamine binding site. Catalysis depends on Cys-379, which acts as the Nucleophile; for glutamine hydrolysis. L-glutamine-binding positions include 380–383 (LGMQ), Glu-403, and Arg-460. Residues His-503 and Glu-505 contribute to the active site.

Belongs to the CTP synthase family. As to quaternary structure, homotetramer.

It carries out the reaction UTP + L-glutamine + ATP + H2O = CTP + L-glutamate + ADP + phosphate + 2 H(+). The catalysed reaction is L-glutamine + H2O = L-glutamate + NH4(+). It catalyses the reaction UTP + NH4(+) + ATP = CTP + ADP + phosphate + 2 H(+). Its pathway is pyrimidine metabolism; CTP biosynthesis via de novo pathway; CTP from UDP: step 2/2. Its activity is regulated as follows. Allosterically activated by GTP, when glutamine is the substrate; GTP has no effect on the reaction when ammonia is the substrate. The allosteric effector GTP functions by stabilizing the protein conformation that binds the tetrahedral intermediate(s) formed during glutamine hydrolysis. Inhibited by the product CTP, via allosteric rather than competitive inhibition. Its function is as follows. Catalyzes the ATP-dependent amination of UTP to CTP with either L-glutamine or ammonia as the source of nitrogen. Regulates intracellular CTP levels through interactions with the four ribonucleotide triphosphates. The chain is CTP synthase from Methanococcoides burtonii (strain DSM 6242 / NBRC 107633 / OCM 468 / ACE-M).